A 426-amino-acid polypeptide reads, in one-letter code: Serine--tRNA ligase (426 aa).

229 to 231 (TAE) provides a ligand contact to L-serine. 260–262 (RSE) is a binding site for ATP. L-serine is bound at residue Glu-283. 347 to 350 (EIAS) provides a ligand contact to ATP. Residue Ser-383 participates in L-serine binding.

The protein belongs to the class-II aminoacyl-tRNA synthetase family. Type-1 seryl-tRNA synthetase subfamily. As to quaternary structure, homodimer. The tRNA molecule binds across the dimer.

It localises to the cytoplasm. It catalyses the reaction tRNA(Ser) + L-serine + ATP = L-seryl-tRNA(Ser) + AMP + diphosphate + H(+). It carries out the reaction tRNA(Sec) + L-serine + ATP = L-seryl-tRNA(Sec) + AMP + diphosphate + H(+). The protein operates within aminoacyl-tRNA biosynthesis; selenocysteinyl-tRNA(Sec) biosynthesis; L-seryl-tRNA(Sec) from L-serine and tRNA(Sec): step 1/1. In terms of biological role, catalyzes the attachment of serine to tRNA(Ser). Is also able to aminoacylate tRNA(Sec) with serine, to form the misacylated tRNA L-seryl-tRNA(Sec), which will be further converted into selenocysteinyl-tRNA(Sec). This is Serine--tRNA ligase from Rickettsia bellii (strain OSU 85-389).